Reading from the N-terminus, the 466-residue chain is Argininosuccinate lyase (466 aa).

Belongs to the lyase 1 family. Argininosuccinate lyase subfamily.

It localises to the cytoplasm. It catalyses the reaction 2-(N(omega)-L-arginino)succinate = fumarate + L-arginine. Its pathway is amino-acid biosynthesis; L-arginine biosynthesis; L-arginine from L-ornithine and carbamoyl phosphate: step 3/3. This chain is Argininosuccinate lyase, found in Synechococcus sp. (strain ATCC 27144 / PCC 6301 / SAUG 1402/1) (Anacystis nidulans).